A 274-amino-acid chain; its full sequence is Dermonecrotic toxin SdSicTox-betaIIB1bvii (274 aa).

H5 is a catalytic residue. The Mg(2+) site is built by E25 and D27. H41 functions as the Nucleophile in the catalytic mechanism. Cystine bridges form between C45–C51 and C47–C190. A Mg(2+)-binding site is contributed by D85.

This sequence belongs to the arthropod phospholipase D family. Class II subfamily. The cofactor is Mg(2+). In terms of tissue distribution, expressed by the venom gland.

Its subcellular location is the secreted. The catalysed reaction is an N-(acyl)-sphingosylphosphocholine = an N-(acyl)-sphingosyl-1,3-cyclic phosphate + choline. It catalyses the reaction an N-(acyl)-sphingosylphosphoethanolamine = an N-(acyl)-sphingosyl-1,3-cyclic phosphate + ethanolamine. It carries out the reaction a 1-acyl-sn-glycero-3-phosphocholine = a 1-acyl-sn-glycero-2,3-cyclic phosphate + choline. The enzyme catalyses a 1-acyl-sn-glycero-3-phosphoethanolamine = a 1-acyl-sn-glycero-2,3-cyclic phosphate + ethanolamine. Dermonecrotic toxins cleave the phosphodiester linkage between the phosphate and headgroup of certain phospholipids (sphingolipid and lysolipid substrates), forming an alcohol (often choline) and a cyclic phosphate. This toxin acts on sphingomyelin (SM). It may also act on ceramide phosphoethanolamine (CPE), lysophosphatidylcholine (LPC) and lysophosphatidylethanolamine (LPE), but not on lysophosphatidylserine (LPS), and lysophosphatidylglycerol (LPG). It acts by transphosphatidylation, releasing exclusively cyclic phosphate products as second products. Induces dermonecrosis, hemolysis, increased vascular permeability, edema, inflammatory response, and platelet aggregation. In Sicarius cf. damarensis (strain GJB-2008) (Six-eyed sand spider), this protein is Dermonecrotic toxin SdSicTox-betaIIB1bvii.